The chain runs to 158 residues: MRTGIGIDVHPFAEGRKLVIGGVEIPSAKGLDGHSDADVLLHAVSDALLGAAALGDIGLHFPNTSQEFKDIDSMILLKHVKKLLDKEGFRIVNIDAMLLLEAPKIASYINEMRKNIARCLGLELNAVSVKATTNEKLGYIGREEGAAAHAVCLIQVKP.

2 residues coordinate a divalent metal cation: Asp8 and His10. Residues 8 to 10 and 34 to 35 each bind 4-CDP-2-C-methyl-D-erythritol 2-phosphate; these read DVH and HS. His42 contacts a divalent metal cation. 4-CDP-2-C-methyl-D-erythritol 2-phosphate-binding positions include 56–58, 132–135, and Arg142; these read DIG and TTNE.

Belongs to the IspF family. In terms of assembly, homotrimer. A divalent metal cation is required as a cofactor.

The enzyme catalyses 4-CDP-2-C-methyl-D-erythritol 2-phosphate = 2-C-methyl-D-erythritol 2,4-cyclic diphosphate + CMP. Its pathway is isoprenoid biosynthesis; isopentenyl diphosphate biosynthesis via DXP pathway; isopentenyl diphosphate from 1-deoxy-D-xylulose 5-phosphate: step 4/6. Involved in the biosynthesis of isopentenyl diphosphate (IPP) and dimethylallyl diphosphate (DMAPP), two major building blocks of isoprenoid compounds. Catalyzes the conversion of 4-diphosphocytidyl-2-C-methyl-D-erythritol 2-phosphate (CDP-ME2P) to 2-C-methyl-D-erythritol 2,4-cyclodiphosphate (ME-CPP) with a corresponding release of cytidine 5-monophosphate (CMP). This Chlorobium phaeobacteroides (strain DSM 266 / SMG 266 / 2430) protein is 2-C-methyl-D-erythritol 2,4-cyclodiphosphate synthase.